The sequence spans 168 residues: Thioredoxin Y, chloroplastic (168 aa).

Residues 1-58 constitute a chloroplast transit peptide; it reads MAAFTSTTTAAAASPTPCRPAALVARSSAAPLRSAAPVVVAAGLRRAAAPSRRGATLR. Residues 59–165 form the Thioredoxin domain; that stretch reads VQAKKQTFSS…LIQQIESALE (107 aa). Catalysis depends on nucleophile residues cysteine 89 and cysteine 92. The cysteines at positions 89 and 92 are disulfide-linked.

Belongs to the thioredoxin family. Plant Y-type subfamily.

The protein localises to the plastid. It localises to the chloroplast. Its function is as follows. Probable thiol-disulfide oxidoreductase that may participate in various redox reactions. This is Thioredoxin Y, chloroplastic from Oryza sativa subsp. japonica (Rice).